The primary structure comprises 444 residues: UDP-N-acetylglucosamine 1-carboxyvinyltransferase (444 aa).

A phosphoenolpyruvate-binding site is contributed by 22-23 (KN). Arginine 94 is a binding site for UDP-N-acetyl-alpha-D-glucosamine. Aspartate 119 (proton donor) is an active-site residue. Aspartate 309 and valine 331 together coordinate UDP-N-acetyl-alpha-D-glucosamine.

The protein belongs to the EPSP synthase family. MurA subfamily.

Its subcellular location is the cytoplasm. It catalyses the reaction phosphoenolpyruvate + UDP-N-acetyl-alpha-D-glucosamine = UDP-N-acetyl-3-O-(1-carboxyvinyl)-alpha-D-glucosamine + phosphate. Its pathway is cell wall biogenesis; peptidoglycan biosynthesis. Functionally, cell wall formation. Adds enolpyruvyl to UDP-N-acetylglucosamine. The chain is UDP-N-acetylglucosamine 1-carboxyvinyltransferase from Chlamydia abortus (strain DSM 27085 / S26/3) (Chlamydophila abortus).